The chain runs to 1198 residues: Phosphatidylinositol-3,5-bisphosphate 3-phosphatase MTMR3 (1198 aa).

The residue at position 8 (Ser-8) is a Phosphoserine. Residues 155–576 (EHVTSRFKNE…RNLMLWSAVY (422 aa)) form the Myotubularin phosphatase domain. Over residues 265-280 (SRSSGSKLSTRNTSRD) the composition is skewed to polar residues. Residues 265-285 (SRSSGSKLSTRNTSRDFPNGG) form a disordered region. A 1,2-diacyl-sn-glycero-3-phospho-(1D-myo-inositol-3,5-bisphosphate)-binding residues include Asn-326, Asn-351, and Ile-352. Asn-326, Asn-351, and Ile-352 together coordinate a 1,2-diacyl-sn-glycero-3-phospho-(1D-myo-inositol-3-phosphate). Cys-413 serves as the catalytic Phosphocysteine intermediate. Residues Ser-414, Asp-415, Gly-416, Trp-417, Asp-418, Arg-419, Lys-455, and Arg-459 each contribute to the a 1,2-diacyl-sn-glycero-3-phospho-(1D-myo-inositol-3,5-bisphosphate) site. Residues Ser-414, Asp-415, Gly-416, Trp-417, Asp-418, and Arg-419 each contribute to the a 1,2-diacyl-sn-glycero-3-phospho-(1D-myo-inositol-3-phosphate) site. Residue Arg-459 participates in a 1,2-diacyl-sn-glycero-3-phospho-(1D-myo-inositol-3-phosphate) binding. The disordered stretch occupies residues 590–612 (CAPYPAPGTSPDDPPLSRLPKTR). A compositionally biased stretch (pro residues) spans 593–603 (YPAPGTSPDDP). 4 positions are modified to phosphoserine: Ser-613, Ser-633, Ser-647, and Ser-651. 3 disordered regions span residues 650–669 (LSSL…LGKP), 716–735 (EGKE…PEAS), and 855–891 (KSVS…SLVE). Positions 716–732 (EGKEDPLLEKESRRKTP) are enriched in basic and acidic residues. Thr-731 bears the Phosphothreonine mark. A phosphoserine mark is found at Ser-906 and Ser-909. Disordered regions lie at residues 933-974 (ETEN…SRQL) and 993-1019 (WLHS…DDDG). Residues 999–1010 (GRPSATSSPDQP) are compositionally biased toward polar residues. A coiled-coil region spans residues 1029 to 1062 (QRLRQIESGHQQEVETLKKQVQELKSRLESQYLT). Position 1064 is a phosphoserine (Ser-1064). An FYVE-type zinc finger spans residues 1119 to 1179 (DHLAAHCYAC…VCKSCYSSLH (61 aa)). Residues Cys-1125, Cys-1128, Cys-1141, Cys-1144, Cys-1149, Cys-1152, Cys-1171, and Cys-1174 each contribute to the Zn(2+) site.

The protein belongs to the protein-tyrosine phosphatase family. Non-receptor class myotubularin subfamily. As to quaternary structure, forms heterodimers with MTMR4 that recruit both CEP55 and PLK1; occurs during early mitosis, regulates the phosphorylation of CEP55 by PLK1 and its recruitment to the midbody where it mediates cell abscission. Phosphorylated by CDK1 during mitosis.

It is found in the cytoplasm. The protein localises to the cytosol. It localises to the membrane. It carries out the reaction a 1,2-diacyl-sn-glycero-3-phospho-(1D-myo-inositol-3,5-bisphosphate) + H2O = a 1,2-diacyl-sn-glycero-3-phospho-(1D-myo-inositol-5-phosphate) + phosphate. It catalyses the reaction a 1,2-diacyl-sn-glycero-3-phospho-(1D-myo-inositol-3-phosphate) + H2O = a 1,2-diacyl-sn-glycero-3-phospho-(1D-myo-inositol) + phosphate. The enzyme catalyses 1,2-dihexadecanoyl-sn-glycero-3-phospho-(1D-myo-inositol-3-phosphate) + H2O = 1,2-dihexadecanoyl-sn-glycero-3-phospho-(1D-myo-inositol) + phosphate. The catalysed reaction is 1,2-dioctanoyl-sn-glycero-3-phospho-(1-D-myo-inositol-3-phosphate) + H2O = 1,2-dioctanoyl-sn-glycero-3-phospho-(1D-myo-inositol) + phosphate. It carries out the reaction 1,2-dihexadecanoyl-sn-glycero-3-phospho-(1D-myo-inositol-3,5-phosphate) + H2O = 1,2-dihexadecanoyl-sn-glycero-3-phospho-(1D-myo-inositol-5-phosphate) + phosphate. Its function is as follows. Lipid phosphatase that specifically dephosphorylates the D-3 position of phosphatidylinositol 3-phosphate and phosphatidylinositol 3,5-bisphosphate, generating phosphatidylinositol and phosphatidylinositol 5-phosphate. Decreases the levels of phosphatidylinositol 3-phosphate, a phospholipid found in cell membranes where it acts as key regulator of both cell signaling and intracellular membrane traffic. Could also have a molecular sequestering/adapter activity and regulate biological processes independently of its phosphatase activity. It includes the regulation of midbody abscission during mitotic cytokinesis. The chain is Phosphatidylinositol-3,5-bisphosphate 3-phosphatase MTMR3 from Homo sapiens (Human).